A 456-amino-acid chain; its full sequence is Probable glycine dehydrogenase (decarboxylating) subunit 1 (456 aa).

The protein belongs to the GcvP family. N-terminal subunit subfamily. In terms of assembly, the glycine cleavage system is composed of four proteins: P, T, L and H. In this organism, the P 'protein' is a heterodimer of two subunits.

The catalysed reaction is N(6)-[(R)-lipoyl]-L-lysyl-[glycine-cleavage complex H protein] + glycine + H(+) = N(6)-[(R)-S(8)-aminomethyldihydrolipoyl]-L-lysyl-[glycine-cleavage complex H protein] + CO2. In terms of biological role, the glycine cleavage system catalyzes the degradation of glycine. The P protein binds the alpha-amino group of glycine through its pyridoxal phosphate cofactor; CO(2) is released and the remaining methylamine moiety is then transferred to the lipoamide cofactor of the H protein. The chain is Probable glycine dehydrogenase (decarboxylating) subunit 1 from Legionella pneumophila (strain Corby).